A 333-amino-acid polypeptide reads, in one-letter code: L-lactate dehydrogenase B chain (333 aa).

Residues 29–57 and arginine 99 contribute to the NAD(+) site; that span reads GQVG…LEDK. Residues arginine 106, asparagine 138, and arginine 169 each coordinate substrate. NAD(+) is bound at residue asparagine 138. Histidine 193 (proton acceptor) is an active-site residue. Substrate is bound at residue threonine 248.

Belongs to the LDH/MDH superfamily. LDH family. In terms of assembly, homotetramer.

It localises to the cytoplasm. It carries out the reaction (S)-lactate + NAD(+) = pyruvate + NADH + H(+). Its pathway is fermentation; pyruvate fermentation to lactate; (S)-lactate from pyruvate: step 1/1. In terms of biological role, interconverts simultaneously and stereospecifically pyruvate and lactate with concomitant interconversion of NADH and NAD(+). The polypeptide is L-lactate dehydrogenase B chain (LDHB) (Anas platyrhynchos (Mallard)).